We begin with the raw amino-acid sequence, 167 residues long: HVA22-like protein b (167 aa).

3 consecutive transmembrane segments (helical) span residues 18-38, 47-67, and 68-88; these read VIAG…RAIE, QWLT…TFFR, and LLEW…WLVL.

It belongs to the DP1 family. Predominantly expressed in flower buds.

It localises to the membrane. The sequence is that of HVA22-like protein b (HVA22B) from Arabidopsis thaliana (Mouse-ear cress).